The sequence spans 286 residues: L-cysteine S-thiosulfotransferase subunit SoxA (286 aa).

The first 27 residues, 1–27 (MKKTIQRGLFTGALVLMTAMTAKPANA), serve as a signal peptide directing secretion. A disulfide bond links cysteine 106 and cysteine 137. Positions 180–286 (DAYMKGKKFF…LKYNGPASRK (107 aa)) constitute a Cytochrome c domain. Positions 200 and 204 each coordinate heme. Arginine 243 provides a ligand contact to substrate. Cysteine 247 serves as a coordination point for heme. Catalysis depends on cysteine 247, which acts as the Cysteine persulfide intermediate.

This sequence belongs to the SoxA family. In terms of assembly, heterodimer of SoxA and SoxX. The SoxAX complex interacts with CT1020, SoxAX-binding protein SaxB (SoxK); this interaction seems to be between SoxA and CT1020 and stimulates catalytic activity of the SoxAX complex. Requires heme as cofactor. Cysteine persulfide at Cys-247.

It is found in the periplasm. It catalyses the reaction L-cysteinyl-[SoxY protein] + thiosulfate + 2 Fe(III)-[cytochrome c] = S-sulfosulfanyl-L-cysteinyl-[SoxY protein] + 2 Fe(II)-[cytochrome c] + 2 H(+). It carries out the reaction S-sulfanyl-L-cysteinyl-[SoxY protein] + thiosulfate + 2 Fe(III)-[cytochrome c] = S-(2-sulfodisulfanyl)-L-cysteinyl-[SoxY protein] + 2 Fe(II)-[cytochrome c] + 2 H(+). Functionally, C-type monoheme cytochrome, which is part of the SoxAX cytochrome complex involved in sulfur oxidation. The SoxAX complex catalyzes the formation of a heterodisulfide bond between the conserved cysteine residue on a sulfur carrier SoxYZ complex subunit SoxY and thiosulfate or other inorganic sulfur substrates. This leads to the liberation of two electrons, which may be transferred from the SoxAX complex to another cytochrome c and which then may be used for reductive CO(2) fixation. This is L-cysteine S-thiosulfotransferase subunit SoxA from Chlorobaculum tepidum (strain ATCC 49652 / DSM 12025 / NBRC 103806 / TLS) (Chlorobium tepidum).